A 249-amino-acid polypeptide reads, in one-letter code: Proline-rich antigen (249 aa).

Pro residues-rich tracts occupy residues 1–20 (MTDQPPPSGSNPTPAPPPPG) and 38–87 (YPPP…PPGP). Positions 1–87 (MTDQPPPSGS…GAYAPPPPGP (87 aa)) are disordered. A 1-1; approximate repeat occupies 34–43 (LGSAYPPPTA). Positions 34–85 (LGSAYPPPTAPPVGGSYPPPPPPGGSYPPPPPPGGSYPPPPPSTGAYAPPPP) are 5 X 10 AA tandem repeats of [PV]-G-G-S-Y-P-P-P-P-P. 3 tandem repeats follow at residues 46–55 (VGGSYPPPPP), 56–65 (PGGSYPPPPP), and 66–75 (PGGSYPPPPP). The 1-5; approximate repeat unit spans residues 76 to 85 (STGAYAPPPP). The RDD domain maps to 99–242 (FWVTRVLAYV…KRQTLADKIM (144 aa)). Repeat copies occupy residues 101 to 123 (VTRVLAYVIDNIPATVLLGIGML) and 134 to 156 (VTDITQYNVNQYCATQPTGIGML). The tract at residues 101–156 (VTRVLAYVIDNIPATVLLGIGMLIQTLTKQEACVTDITQYNVNQYCATQPTGIGML) is 2 X 23 AA approximate repeats. 3 helical membrane passes run 104-124 (VLAYVIDNIPATVLLGIGMLI), 151-171 (TGIGMLAFWFAWLMATAYLVW), and 212-232 (LAHFVDAVICCIGFLFPLWDS).

Belongs to the mycobacterial Pra family.

The protein localises to the cell membrane. The polypeptide is Proline-rich antigen (ag36) (Mycobacterium leprae (strain TN)).